Consider the following 143-residue polypeptide: Small ribosomal subunit protein uS11c (143 aa).

Belongs to the universal ribosomal protein uS11 family. Part of the 30S ribosomal subunit.

Its subcellular location is the plastid. It localises to the chloroplast. In Cenchrus americanus (Pearl millet), this protein is Small ribosomal subunit protein uS11c.